Here is a 467-residue protein sequence, read N- to C-terminus: Serine decarboxylase 2 (467 aa).

A substrate-binding site is contributed by histidine 178. The residue at position 290 (lysine 290) is an N6-(pyridoxal phosphate)lysine.

Belongs to the group II decarboxylase family. Pyridoxal 5'-phosphate is required as a cofactor.

The catalysed reaction is L-serine + H(+) = ethanolamine + CO2. Functionally, catalyzes the biosynthesis of ethanolamine from serine. Decarboxylation of free serine is the major source of ethanolamine production in plants and ethanolamine metabolism is crucial for the synthesis of choline, phosphatidylethanolamine (PE) and phosphatidylcholine (PC), and thus for plant growth. The chain is Serine decarboxylase 2 from Oryza sativa subsp. japonica (Rice).